A 129-amino-acid polypeptide reads, in one-letter code: Transmembrane protein 105 (129 aa).

Transmembrane regions (helical) follow at residues 23-43 (AGNVIGQLIYLLTWSLFTAWL) and 94-114 (FLAGGLHLVPSSLSLAACGVV).

It localises to the membrane. The polypeptide is Transmembrane protein 105 (TMEM105) (Homo sapiens (Human)).